Consider the following 828-residue polypeptide: Periplasmic nitrate reductase (828 aa).

Residues Met-1–Ala-31 constitute a signal peptide (tat-type signal). In terms of domain architecture, 4Fe-4S Mo/W bis-MGD-type spans Ile-39–Asp-95. Residues Cys-46, Cys-49, Cys-53, and Cys-81 each coordinate [4Fe-4S] cluster. Mo-bis(molybdopterin guanine dinucleotide) contacts are provided by residues Lys-83, Gln-150, Asn-175, Cys-179, Trp-212–Met-219, Ser-243–His-247, Gln-262–Asp-264, Met-372, Gln-376, Asn-482, Ser-508–Asp-509, Lys-531, Asp-558, and Thr-718–Thr-727. Residue Phe-794 coordinates substrate. Mo-bis(molybdopterin guanine dinucleotide) contacts are provided by Asn-802 and Lys-819.

Belongs to the prokaryotic molybdopterin-containing oxidoreductase family. NasA/NapA/NarB subfamily. As to quaternary structure, component of the periplasmic nitrate reductase NapAB complex composed of NapA and NapB. Requires [4Fe-4S] cluster as cofactor. The cofactor is Mo-bis(molybdopterin guanine dinucleotide). Predicted to be exported by the Tat system. The position of the signal peptide cleavage has not been experimentally proven.

It is found in the periplasm. The catalysed reaction is 2 Fe(II)-[cytochrome] + nitrate + 2 H(+) = 2 Fe(III)-[cytochrome] + nitrite + H2O. Catalytic subunit of the periplasmic nitrate reductase complex NapAB. Receives electrons from NapB and catalyzes the reduction of nitrate to nitrite. The polypeptide is Periplasmic nitrate reductase (Salmonella schwarzengrund (strain CVM19633)).